Consider the following 1865-residue polypeptide: Transcription initiation factor TFIID subunit 1 (1865 aa).

Residues 1 to 27 (MLLPATGASRSAAIMSDTDSDEDSSGG) are disordered. The 409-residue stretch at 1-409 (MLLPATGASR…VTQLHWEDDI (409 aa)) folds into the Protein kinase 1 domain. S131 carries the phosphoserine; by autocatalysis modification. Positions 144-199 (EDIDCKLMPPPPPPPGPVKKEKDQDGLTGEKVDFSSSSDSESEMGPQEAAQAESKD) are disordered. The span at 151-160 (MPPPPPPPGP) shows a compositional bias: pro residues. Residues 161-176 (VKKEKDQDGLTGEKVD) show a composition bias toward basic and acidic residues. At S302 the chain carries Phosphoserine; by autocatalysis. The disordered stretch occupies residues 509-530 (PDEKEEATSNSPSKENKKESSL). The interval 512–971 (KEEATSNSPS…KIPNKPTQQK (460 aa)) is histone acetyltransferase (HAT). Residue K539 is modified to N6-acetyllysine. Residues K544 and K557 each participate in a glycyl lysine isopeptide (Lys-Gly) (interchain with G-Cter in SUMO2) cross-link. Disordered stretches follow at residues 964–983 (PNKPTQQKDDKEPQPVKKTV) and 1228–1252 (RLKRNQEKEKLKGPPEKKPKKMKER). Basic and acidic residues-rich tracts occupy residues 969–978 (QQKDDKEPQP) and 1228–1244 (RLKRNQEKEKLKGPPEK). Positions 1190–1268 (VRIRTTKDEE…CGACGAIGHM (79 aa)) form a DNA-binding region, HMG box. Positions 1337–1624 (VLKFPKQQLP…TAKEAALEEA (288 aa)) are interaction with ASF1A and ASF1B. Positions 1346 to 1353 (PPKKKRRV) match the Nuclear localization signal motif. 2 consecutive Bromo domains span residues 1371–1479 (RRRT…LKEK) and 1493–1602 (LLDD…LTEY). In terms of domain architecture, Protein kinase 2 spans 1420-1865 (MDLQTLRENV…AGDSDMDSDE (446 aa)). The segment at 1625-1865 (ELESLDPMTP…AGDSDMDSDE (241 aa)) is disordered. Over residues 1633–1642 (TPGPYTPQPP) the composition is skewed to pro residues. Residues 1646–1682 (DNSTSLSVSRDASVYQDESNMSVLDIPSATSEKQLTQ) are compositionally biased toward polar residues. Phosphoserine is present on residues S1664 and S1667. 2 stretches are compositionally biased toward acidic residues: residues 1683-1697 (EGEDGDGDLADEEEG) and 1715-1730 (EGEDDEEDAGSDEEGD). Residues 1739–1751 (SESGSDSDVGSGS) are compositionally biased toward low complexity. Phosphoserine is present on residues S1773, S1776, and S1794. Over residues 1804–1814 (KSNTQDTSFSS) the composition is skewed to polar residues. A compositionally biased stretch (acidic residues) spans 1820–1829 (VSEEEEDEEE). S1821 is subject to Phosphoserine. Residues 1832–1841 (SGPSVLSQVH) are compositionally biased toward polar residues.

It belongs to the TAF1 family. As to quaternary structure, component of the TFIID basal transcription factor complex, composed of TATA-box-binding protein TBP, and a number of TBP-associated factors (TAFs), including TAF1, TAF2, TAF3, TAF4, TAF5, TAF6, TAF7, TAF8, TAF9, TAF10, TAF11, TAF12 and TAF13. Interacts with TAF7; the interaction is direct. TAF1, when part of the TFIID complex, interacts with C-terminus of TP53. Part of a TFIID-containing RNA polymerase II pre-initiation complex that is composed of TBP and at least GTF2A1, GTF2A2, GTF2E1, GTF2E2, GTF2F1, GTF2H2, GTF2H3, GTF2H4, GTF2H5, GTF2B, TCEA1, ERCC2, ERCC3, TAF1, TAF2, TAF3, TAF4, TAF5, TAF6, TAF7, TAF8, TAF9, TAF10, TAF11, TAF12 and TAF13. Component of some MLL1/MLL complex, at least composed of the core components KMT2A/MLL1, ASH2L, HCFC1/HCF1, WDR5 and RBBP5, as well as the facultative components BACC1, CHD8, E2F6, HSP70, INO80C, KANSL1, LAS1L, MAX, MCRS1, MGA, KAT8/MOF, PELP1, PHF20, PRP31, RING2, RUVB1/TIP49A, RUVB2/TIP49B, SENP3, TAF1, TAF4, TAF6, TAF7, TAF9 and TEX10. RB1 interacts with the N-terminal domain of TAF1. Interacts with ASF1A and ASF1B. Interacts (via bromo domains) with acetylated lysine residues on the N-terminus of histone H1.4, H2A, H2B, H3 and H4 (in vitro). Mg(2+) is required as a cofactor. In terms of processing, phosphorylated by casein kinase II in vitro.

It is found in the nucleus. It catalyses the reaction L-seryl-[protein] + ATP = O-phospho-L-seryl-[protein] + ADP + H(+). It carries out the reaction L-threonyl-[protein] + ATP = O-phospho-L-threonyl-[protein] + ADP + H(+). The catalysed reaction is L-lysyl-[protein] + acetyl-CoA = N(6)-acetyl-L-lysyl-[protein] + CoA + H(+). Its activity is regulated as follows. Autophosphorylates on Ser residues. Inhibited by retinoblastoma tumor suppressor protein, RB1. Binding to TAF1 or CIITA inhibits the histone acetyltransferase activity. Functionally, the TFIID basal transcription factor complex plays a major role in the initiation of RNA polymerase II (Pol II)-dependent transcription. TFIID recognizes and binds promoters with or without a TATA box via its subunit TBP, a TATA-box-binding protein, and promotes assembly of the pre-initiation complex (PIC). The TFIID complex consists of TBP and TBP-associated factors (TAFs), including TAF1, TAF2, TAF3, TAF4, TAF5, TAF6, TAF7, TAF8, TAF9, TAF10, TAF11, TAF12 and TAF13. TAF1 is the largest component and core scaffold of the TFIID complex, involved in nucleating complex assembly. TAF1 forms a promoter DNA binding subcomplex of TFIID, together with TAF7 and TAF2. Contains novel N- and C-terminal Ser/Thr kinase domains which can autophosphorylate or transphosphorylate other transcription factors. Phosphorylates TP53 on 'Thr-55' which leads to MDM2-mediated degradation of TP53. Phosphorylates GTF2A1 and GTF2F1 on Ser residues. Possesses DNA-binding activity. Essential for progression of the G1 phase of the cell cycle. The chain is Transcription initiation factor TFIID subunit 1 from Mesocricetus auratus (Golden hamster).